A 310-amino-acid chain; its full sequence is MTDIRITGIPKEAGFGDYVALLKPRVMSLVVFTALVGLLVAPVTVHPMIALTGILFIALGAGASGALNMWWDEDIDRVMKRTRNRPVPSGTVAPGEALGIGLALSGIAVVMLGLATNLFAAGLLAFTIFFYAVVYSMWLKRTTPQNIVIGGAAGAFPPMIGWAVATGGVSVESLFMFALIFMWTPPHFWSLALFMKSDYSDAGVPMLTVTHGRRVTRAHVLVYSLLLAPLAVAGAFTGIGGPLYLATALALNGWLLVGAVRIWRRDEAQAEADRYRVEKGFFRFSLYYLFLHFGAILAEAALKPYGLGGW.

Transmembrane regions (helical) follow at residues 26–45, 49–71, 95–115, 118–138, 147–167, 174–194, 220–240, 243–263, and 289–309; these read VMSL…PVTV, IALT…NMWW, GEAL…LGLA, LFAA…YSMW, IVIG…VATG, LFMF…LALF, VLVY…TGIG, LYLA…VRIW, and LFLH…GLGG.

It belongs to the UbiA prenyltransferase family. Protoheme IX farnesyltransferase subfamily. Interacts with CtaA.

Its subcellular location is the cell inner membrane. It carries out the reaction heme b + (2E,6E)-farnesyl diphosphate + H2O = Fe(II)-heme o + diphosphate. The protein operates within porphyrin-containing compound metabolism; heme O biosynthesis; heme O from protoheme: step 1/1. Its function is as follows. Converts heme B (protoheme IX) to heme O by substitution of the vinyl group on carbon 2 of heme B porphyrin ring with a hydroxyethyl farnesyl side group. The sequence is that of Protoheme IX farnesyltransferase from Cereibacter sphaeroides (strain ATCC 17029 / ATH 2.4.9) (Rhodobacter sphaeroides).